The sequence spans 383 residues: Probable acyl-CoA dehydrogenase YdiO (383 aa).

Belongs to the acyl-CoA dehydrogenase family. The cofactor is FAD.

The enzyme catalyses a 2,3-saturated acyl-CoA + A = a 2,3-dehydroacyl-CoA + AH2. The protein is Probable acyl-CoA dehydrogenase YdiO (ydiO) of Escherichia coli O157:H7.